A 245-amino-acid chain; its full sequence is Thiopurine S-methyltransferase (245 aa).

29–40 lines the S-adenosyl-L-methionine pocket; the sequence is WREKWVDGKIGF. Phenylalanine 40 serves as a coordination point for substrate. Lysine 58 carries the post-translational modification N6-acetyllysine. Residues leucine 69, glutamate 90, and arginine 152 each contribute to the S-adenosyl-L-methionine site.

It belongs to the class I-like SAM-binding methyltransferase superfamily. TPMT family. As to quaternary structure, monomer.

The protein localises to the cytoplasm. The enzyme catalyses S-adenosyl-L-methionine + a thiopurine = S-adenosyl-L-homocysteine + a thiopurine S-methylether.. In Panthera pardus (Leopard), this protein is Thiopurine S-methyltransferase (TPMT).